The primary structure comprises 305 residues: MLDISIQELIKQWQKYLILQRNYSNNTVIAYNNDLKHFLEFMNYYNSELVTINHIKTVDIRLIRSWLAKRKYENFTASSIARGLSTVKNFYKFLEKTILLNSHIIFSIKSPKKAKLLPKALSVDDVLISLEHIEGYGNVKWVELRNKALLVLIYAAGLRISEALSITKLHLQNLEFIKIIGKGSKERIIPWLPFARNLITKYLGILPYKLDENEPIFRGKHGKKLQPSVFNRELIKLKRVYGLPEYLTAHSFRHSFASHLLEYGADLRSIQELLGHKSLSTTQKYTQTSIKHLEAVYNTAYPIKK.

Residues 4-95 (ISIQELIKQW…TVKNFYKFLE (92 aa)) enclose the Core-binding (CB) domain. The Tyr recombinase domain maps to 116–298 (LLPKALSVDD…SIKHLEAVYN (183 aa)). Active-site residues include R159, K182, H250, R253, and H276. Residue Y285 is the O-(3'-phospho-DNA)-tyrosine intermediate of the active site.

The protein belongs to the 'phage' integrase family. XerC subfamily. Forms a cyclic heterotetrameric complex composed of two molecules of XerC and two molecules of XerD.

Its subcellular location is the cytoplasm. Its function is as follows. Site-specific tyrosine recombinase, which acts by catalyzing the cutting and rejoining of the recombining DNA molecules. The XerC-XerD complex is essential to convert dimers of the bacterial chromosome into monomers to permit their segregation at cell division. It also contributes to the segregational stability of plasmids. The sequence is that of Tyrosine recombinase XerC from Rickettsia typhi (strain ATCC VR-144 / Wilmington).